The following is a 265-amino-acid chain: MTDSALDRTLVARHLRFQTNGRYLTDDVSLELNCGEIVAIIGPNGAGKSTLLRLLTGYLTPDDGECLLAGQPFSHWQPSALAKTRAVMRQHSGMAFAFSVQDVVAMGRSPHGRYPKNDDVVQQVMAQTGCLELATRDYRHLSGGEQQRVQLARVLAQLWHPEPTPGWLFLDEPTSALDLYHQQHLLRLLKQLTREQPLAVCCVLHDLNLAALYADRILLLHEGKLVAQGSPADVLQAETLAHWYRADLSVGSHPDYAIPQVYLRQ.

Residues 10–247 (LVARHLRFQT…ETLAHWYRAD (238 aa)) enclose the ABC transporter domain. Position 42–49 (42–49 (GPNGAGKS)) interacts with ATP.

Belongs to the ABC transporter superfamily. Heme (hemin) importer (TC 3.A.1.14.5) family. As to quaternary structure, the complex is composed of two ATP-binding proteins (HmuV), two transmembrane proteins (HmuU) and a solute-binding protein (HmuT).

Its subcellular location is the cell inner membrane. Functionally, part of the ABC transporter complex HmuTUV involved in hemin import. Responsible for energy coupling to the transport system. The sequence is that of Hemin import ATP-binding protein HmuV from Pectobacterium atrosepticum (strain SCRI 1043 / ATCC BAA-672) (Erwinia carotovora subsp. atroseptica).